A 434-amino-acid polypeptide reads, in one-letter code: Trigger factor (434 aa).

Residues 161 to 246 form the PPIase FKBP-type domain; that stretch reads EDRATIDFTG…LKKVEERELP (86 aa).

It belongs to the FKBP-type PPIase family. Tig subfamily.

It is found in the cytoplasm. The catalysed reaction is [protein]-peptidylproline (omega=180) = [protein]-peptidylproline (omega=0). Involved in protein export. Acts as a chaperone by maintaining the newly synthesized protein in an open conformation. Functions as a peptidyl-prolyl cis-trans isomerase. The sequence is that of Trigger factor from Pectobacterium atrosepticum (strain SCRI 1043 / ATCC BAA-672) (Erwinia carotovora subsp. atroseptica).